Reading from the N-terminus, the 920-residue chain is Nitrate reductase [NADH] (920 aa).

The tract at residues 1–69 (MAASVENRQF…DTSDDEEDEA (69 aa)) is disordered. Residues 60–69 (DTSDDEEDEA) show a composition bias toward acidic residues. Cys-185 contacts Mo-molybdopterin. Residues 534-609 (SLTFTMSEVK…LEEYRVGELI (76 aa)) form the Cytochrome b5 heme-binding domain. Heme is bound by residues His-569 and His-592. In terms of domain architecture, FAD-binding FR-type spans 663 to 775 (REKIPCKLIS…KGPLGHIEYM (113 aa)). FAD is bound by residues 715–718 (RAYT), 732–736 (LVKIY), Phe-737, Phe-744, 749–751 (LMS), and Thr-802.

Belongs to the nitrate reductase family. Homodimer. Requires FAD as cofactor. The cofactor is heme. Mo-molybdopterin serves as cofactor. In terms of tissue distribution, in cortical cells of roots grown at low nitrate concentrations, in vascular tissues of roots at high nitrate concentrations and in root apex under both conditions.

It carries out the reaction nitrite + NAD(+) + H2O = nitrate + NADH + H(+). Functionally, nitrate reductase is a key enzyme involved in the first step of nitrate assimilation in plants, fungi and bacteria. The protein is Nitrate reductase [NADH] (NIA) of Cichorium intybus (Chicory).